Reading from the N-terminus, the 1331-residue chain is MVEVSEKPNTQDDGVSKQENRNPASSSSSTSDKEKVAKKGNSDATKSSTPEDLDAQLAHLPEHEREILKQQLFIPDAKATYGTLFRYATRNDMIFLAIVSLASIAAGAALPLFTVLFGSLAGTFRDIALHRITYDEFNSILTRNSLYFVYLGIAQFILLYVSTVGFIYVGEHITQKIRAKYLHAILRQNIGFFDKLGAGEVTTRITADTNLIQDGISEKVGLTLTALSTFFSAFIIGYVRYWKLALICSSTIVAMILVMGGISRFVVKSGRMTLVSYGEGGTVAEEVISSIRNATAFGTQEKLARQYEVHLKEARKWGRRLQMMLGIMFGSMMAIMYSNYGLGFWMGSRFLVGGETDLSAIVNILLAIVIGSFSIGNVAPNTQAFASAISAGAKIFSTIDRVSAIDPGSDEGDTIENVEGTIEFRGIKHIYPSRPEVVVMEDINLVVPKGKTTALVGPSGSGKSTVVGLLERFYNPVSGSVLLDGRDIKTLNLRWLRQQISLVSQEPTLFGTTIFENIRLGLIGSPMENESEEQIKERIVSAAKEANAHDFIMGLPDGYATDVGQRGFLLSGGQKQRIAIARAIVSDPKILLLDEATSALDTKSEGVVQAALDAASRGRTTIVIAHRLSTIKSADNIVVIVGGRIAEQGTHDELVDKKGTYLQLVEAQKINEERGEESEDEAVLEKEKEISRQISVPAKSVNSGKYPDEDVEANLGRIDTKKSLSSVILSQKRSQEKETEYSLGTLIRFIAGFNKPERLIMLCGFFFAVLSGAGQPVQSVFFAKGITTLSLPPSLYGKLREDANFWSLMFLMLGLVQLVTQSAQGVIFAICSESLIYRARSKSFRAMLRQDIAFFDLPENSTGALTSFLSTETKHLSGVSGATLGTILMVSTTLIVALTVALAFGWKLALVCISTVPVLLLCGFYRFWILAQFQTRAKKAYESSASYACEATSSIRTVASLTREQGVMEIYEGQLNDQAKKSLRSVAKSSLLYAASQSFSFFCLALGFWYGGGLLGKGEYNAFQFFLCISCVIFGSQSAGIVFSFSPDMGKAKSAAADFKRLFDRVPTIDIESPDGEKLETVEGTIEFRDVHFRYPTRPEQPVLRGLNLTVKPGQYIALVGPSGCGKSTTIALVERFYDTLSGGVYIDGKDISRLNVNSYRSHLALVSQEPTLYQGTIRDNVLLGVDRDDVPDEQVFAACKAANIYDFIMSLPDGFGTVVGSKGSMLSGGQKQRIAIARALIRDPKVLLLDEATSALDSESEKVVQAALDAAAKGRTTIAVAHRLSTIQKADIIYVFDQGRIVESGTHHELLQNKGRYYELVHMQSLEKTQ.

2 stretches are compositionally biased toward basic and acidic residues: residues 1 to 20 (MVEVSEKPNTQDDGVSKQEN) and 31 to 41 (SDKEKVAKKGN). The interval 1 to 51 (MVEVSEKPNTQDDGVSKQENRNPASSSSSTSDKEKVAKKGNSDATKSSTPE) is disordered. Transmembrane regions (helical) follow at residues 93-113 (MIFLAIVSLASIAAGAALPLF), 147-167 (YFVYLGIAQFILLYVSTVGFI), 219-239 (KVGLTLTALSTFFSAFIIGYV), and 242-262 (WKLALICSSTIVAMILVMGGI). One can recognise an ABC transmembrane type-1 1 domain in the interval 97-387 (AIVSLASIAA…VAPNTQAFAS (291 aa)). A glycan (N-linked (GlcNAc...) asparagine) is linked at asparagine 293. 2 helical membrane passes run 325–345 (LGIMFGSMMAIMYSNYGLGFW) and 358–378 (LSAIVNILLAIVIGSFSIGNV). Residues 422–667 (IEFRGIKHIY…KGTYLQLVEA (246 aa)) enclose the ABC transporter 1 domain. 457 to 464 (GPSGSGKS) serves as a coordination point for ATP. Asparagine 529 carries an N-linked (GlcNAc...) asparagine glycan. 2 consecutive transmembrane segments (helical) span residues 762–782 (LCGFFFAVLSGAGQPVQSVFF) and 810–830 (FLMLGLVQLVTQSAQGVIFAI). One can recognise an ABC transmembrane type-1 2 domain in the interval 764 to 1051 (GFFFAVLSGA…VFSFSPDMGK (288 aa)). A glycan (N-linked (GlcNAc...) asparagine) is linked at asparagine 860. A run of 4 helical transmembrane segments spans residues 884–904 (LGTILMVSTTLIVALTVALAF), 910–930 (LVCISTVPVLLLCGFYRFWIL), 995–1015 (ASQSFSFFCLALGFWYGGGLL), and 1025–1045 (FFLCISCVIFGSQSAGIVFSF). Residues 1086 to 1324 (IEFRDVHFRY…KGRYYELVHM (239 aa)) form the ABC transporter 2 domain. A glycan (N-linked (GlcNAc...) asparagine) is linked at asparagine 1108. 1121–1128 (GPSGCGKS) serves as a coordination point for ATP.

Belongs to the ABC transporter superfamily. ABCB family. Multidrug resistance exporter (TC 3.A.1.201) subfamily.

The protein localises to the cell membrane. It carries out the reaction itraconazole(in) + ATP + H2O = itraconazole(out) + ADP + phosphate + H(+). Pleiotropic ABC efflux transporter that may be involved in the modulation susceptibility to a wide range of unrelated cytotoxic compounds, including terbinafine, 4-nitroquinoline N-oxide, and ethidium bromide. May play a role in pathogenicity. The protein is ABC multidrug transporter MDR2 of Trichophyton interdigitale (strain MR816).